We begin with the raw amino-acid sequence, 247 residues long: tRNA pseudouridine synthase A (247 aa).

Catalysis depends on Asp-53, which acts as the Nucleophile. Tyr-111 is a binding site for substrate.

This sequence belongs to the tRNA pseudouridine synthase TruA family. Homodimer.

It carries out the reaction uridine(38/39/40) in tRNA = pseudouridine(38/39/40) in tRNA. Formation of pseudouridine at positions 38, 39 and 40 in the anticodon stem and loop of transfer RNAs. The polypeptide is tRNA pseudouridine synthase A (Bacillus subtilis (strain 168)).